A 325-amino-acid chain; its full sequence is Protein TMED8 (325 aa).

The segment at 1-78 is disordered; the sequence is MSDLQAAEGP…MVSPVSKDAT (78 aa). The 165-residue stretch at 159-323 folds into the GOLD domain; sequence PPCIWTFAKV…NKTLYFHIYY (165 aa). Lysine 169 bears the N6-acetyllysine mark. The disordered stretch occupies residues 232 to 267; it reads TVQVSDSSDDEDEEEEEEEEIEEPVPAGDVERGSRS. A compositionally biased stretch (acidic residues) spans 238 to 254; it reads SSDDEDEEEEEEEEIEE.

This Homo sapiens (Human) protein is Protein TMED8 (TMED8).